Here is a 256-residue protein sequence, read N- to C-terminus: Alcohol dehydrogenase (256 aa).

12–35 (FVAGLGGIGLDTSREIVKAGPKNL) serves as a coordination point for NAD(+). A substrate-binding site is contributed by Ser-140. The active-site Proton acceptor is the Tyr-153.

Belongs to the short-chain dehydrogenases/reductases (SDR) family. Homodimer.

The catalysed reaction is a primary alcohol + NAD(+) = an aldehyde + NADH + H(+). It carries out the reaction a secondary alcohol + NAD(+) = a ketone + NADH + H(+). The sequence is that of Alcohol dehydrogenase (Adh) from Zaprionus tuberculatus (Vinegar fly).